The following is a 495-amino-acid chain: Steroid 21-hydroxylase (495 aa).

Heme b is bound by residues arginine 92 and lysine 121. Arginine 234 provides a ligand contact to 17alpha-hydroxyprogesterone. Arginine 234 contacts progesterone. Histidine 366, arginine 427, and cysteine 429 together coordinate heme b.

It belongs to the cytochrome P450 family. It depends on heme b as a cofactor.

It localises to the endoplasmic reticulum membrane. Its subcellular location is the microsome membrane. It carries out the reaction progesterone + reduced [NADPH--hemoprotein reductase] + O2 = 21-hydroxyprogesterone + oxidized [NADPH--hemoprotein reductase] + H2O + H(+). The catalysed reaction is 17alpha-hydroxyprogesterone + reduced [NADPH--hemoprotein reductase] + O2 = 11-deoxycortisol + oxidized [NADPH--hemoprotein reductase] + H2O + H(+). A cytochrome P450 monooxygenase that plays a major role in adrenal steroidogenesis. Catalyzes the hydroxylation at C-21 of progesterone and 17alpha-hydroxyprogesterone to respectively form 11-deoxycorticosterone and 11-deoxycortisol, intermediate metabolites in the biosynthetic pathway of mineralocorticoids and glucocorticoids. Mechanistically, uses molecular oxygen inserting one oxygen atom into a substrate, and reducing the second into a water molecule, with two electrons provided by NADPH via cytochrome P450 reductase (CPR; NADPH-ferrihemoprotein reductase). This Homo sapiens (Human) protein is Steroid 21-hydroxylase (CYP21A2).